We begin with the raw amino-acid sequence, 138 residues long: MRLTQGTFSFLPDLTDEQINKQLAYIVSKGLSANVEYTDDPHPRNSYWELWGLPLFDVKDASAVMYEISSCRKAKPNYYVKVNAFDNTRGIESCVMSFIVNRPANEPGFLLQRQDFEGRTMKYSLHSYATEKPEGARY.

Belongs to the RuBisCO small chain family. In terms of assembly, heterohexadecamer of 8 large and 8 small subunits.

Its subcellular location is the plastid. It localises to the chloroplast. Its function is as follows. RuBisCO catalyzes two reactions: the carboxylation of D-ribulose 1,5-bisphosphate, the primary event in carbon dioxide fixation, as well as the oxidative fragmentation of the pentose substrate in the photorespiration process. Both reactions occur simultaneously and in competition at the same active site. Although the small subunit is not catalytic it is essential for maximal activity. The chain is Ribulose bisphosphate carboxylase small subunit from Pyropia yezoensis (Susabi-nori).